We begin with the raw amino-acid sequence, 164 residues long: uncharacterized protein (164 aa).

Residues 1 to 60 (MERSASVGVNDGRFGGNQFYSPSFSSSSSSSSMRHVNYSCGSCGYELNLSSTNRITSTIG) constitute a chloroplast transit peptide.

It localises to the plastid. The protein localises to the chloroplast. This is an uncharacterized protein from Arabidopsis thaliana (Mouse-ear cress).